The sequence spans 865 residues: LINE-1 type transposase domain-containing protein 1 (865 aa).

Position 2 is an N-acetylserine (S2). Phosphoserine is present on S2. T149 carries the post-translational modification Phosphothreonine. S154 is modified (phosphoserine). The disordered stretch occupies residues 370–508 (EMKNLETQEE…EKKASRRQKE (139 aa)). Acidic residues-rich tracts occupy residues 376 to 440 (TQEE…EQTS) and 472 to 483 (SVEDSESEEEEE). A phosphoserine mark is found at S472, S476, and S478. A compositionally biased stretch (basic and acidic residues) spans 498 to 508 (TEKKASRRQKE). Residues S518, S561, and S573 each carry the phosphoserine modification. Over residues 590–608 (EEKKHRTLHTEELTSKEAD) the composition is skewed to basic and acidic residues. Residues 590-612 (EEKKHRTLHTEELTSKEADLTEE) form a disordered region. Residues S640, S648, and S665 each carry the phosphoserine modification. Residues 642–684 (VLEIENSVDDLSSRMDILEERIDSLEDQIEEFSKDTMQMTKQI) are a coiled coil.

Belongs to the transposase 22 family.

This Homo sapiens (Human) protein is LINE-1 type transposase domain-containing protein 1 (L1TD1).